Here is a 463-residue protein sequence, read N- to C-terminus: MSNLGKVIQIIGPIIDIKFDSENLPDLFNALEINAGDRKVIAEVEQHIGDDTIRAIAMEDTEGLKRGMEALDTGKSVSVPVGKEVLGRLFNVLGKPIDGAGEFTSEESYPIHRPAPSFEEQSVEPEIFETGIKVIDLLAPYQKGGKIGLFGGAGVGKTVLIQELINNIAKEHGGLSVFTGVGERTREGNDLYYEMKESGVLEKTALVFGQMNEPPGARMRVALTGLTMSEYFRDQGQDVLLFIDNIFRFTQAGSEVSALLGRIPSAVGYQPTLATEMGALQERITSTKNGSITSVQAVYVPADDLTDPAPATTFAHLDATTVLSRAITELGIYPAVDPLESSSRMLDPRIIGEEHYEVAIKVKNILERYRELQDIIAILGIDELSEEDKLVVGRARKIQRFLSQPFTVAEQFTGMQGKYVPIKETVRGFKEILEGKHDNIPESAFLFQGTIEDVLKKAQQMEI.

151-158 (GGAGVGKT) provides a ligand contact to ATP.

Belongs to the ATPase alpha/beta chains family. F-type ATPases have 2 components, CF(1) - the catalytic core - and CF(0) - the membrane proton channel. CF(1) has five subunits: alpha(3), beta(3), gamma(1), delta(1), epsilon(1). CF(0) has three main subunits: a(1), b(2) and c(9-12). The alpha and beta chains form an alternating ring which encloses part of the gamma chain. CF(1) is attached to CF(0) by a central stalk formed by the gamma and epsilon chains, while a peripheral stalk is formed by the delta and b chains.

The protein localises to the cell membrane. It carries out the reaction ATP + H2O + 4 H(+)(in) = ADP + phosphate + 5 H(+)(out). Its function is as follows. Produces ATP from ADP in the presence of a proton gradient across the membrane. The catalytic sites are hosted primarily by the beta subunits. In Clostridium botulinum (strain Okra / Type B1), this protein is ATP synthase subunit beta.